The primary structure comprises 242 residues: uncharacterized protein (242 aa).

An S4 RNA-binding domain is found at 2 to 69 (YRLAKIISNA…KPRLWIYYKP (68 aa)). Asp-102 functions as the Nucleophile in the catalytic mechanism.

The protein belongs to the pseudouridine synthase RsuA family.

It catalyses the reaction a uridine in RNA = a pseudouridine in RNA. This is an uncharacterized protein from Rickettsia typhi (strain ATCC VR-144 / Wilmington).